The sequence spans 57 residues: Large ribosomal subunit protein bL32 (57 aa).

Basic residues predominate over residues 1–19; that stretch reads MATPKRRMSRANTRSRRAQ. The disordered stretch occupies residues 1 to 20; the sequence is MATPKRRMSRANTRSRRAQW.

The protein belongs to the bacterial ribosomal protein bL32 family.

In Mycobacterium leprae (strain Br4923), this protein is Large ribosomal subunit protein bL32.